The sequence spans 168 residues: MLVYQDLVSGDELLSDSFPYKEIENGMIWEVEGKWVVKGAVDVDIGANPSAEGGGEDEGVDDQAVKVVDIVDTFRLQEQPSMDKKVFLSCIKKYIKKLTPLLQGEQQEAFKNKIEGAVKYLLPKVKDLQFFVGESMADDSAMVFAYYKEGATDPTFLYIAPGLKEVKC.

A TCTP domain is found at 1–168; the sequence is MLVYQDLVSG…IAPGLKEVKC (168 aa).

This sequence belongs to the TCTP family.

The protein localises to the cytoplasm. In terms of biological role, involved in calcium binding and microtubule stabilization. The protein is Translationally-controlled tumor protein homolog (TCTP) of Cucumis melo (Muskmelon).